A 380-amino-acid polypeptide reads, in one-letter code: Flap endonuclease 1 (380 aa).

Residues 1–105 form an N-domain region; it reads MGIKGLAQVL…GELAKRVARH (105 aa). Aspartate 34 provides a ligand contact to Mg(2+). DNA-binding residues include arginine 47 and arginine 71. Mg(2+) is bound by residues aspartate 87, glutamate 159, glutamate 161, aspartate 180, and aspartate 182. The tract at residues 123-254 is I-domain; that stretch reads MVDRFAKRTV…ARAVELIRQY (132 aa). Glutamate 159 contributes to the DNA binding site. DNA-binding residues include glycine 232 and aspartate 234. A Mg(2+)-binding site is contributed by aspartate 234. Positions 337 to 345 are interaction with PCNA; that stretch reads PQGRLDSFF. The tract at residues 340-380 is disordered; sequence RLDSFFKPVPSSPKKPVDTKSKGSAKRKRDSNKGGESKKKR. The span at 342-353 shows a compositional bias: low complexity; that stretch reads DSFFKPVPSSPK. Serine 350 and serine 351 each carry phosphoserine. A compositionally biased stretch (basic and acidic residues) spans 370-380; sequence SNKGGESKKKR.

Belongs to the XPG/RAD2 endonuclease family. FEN1 subfamily. In terms of assembly, interacts with PCNA. Three molecules of rad2 bind to one PCNA trimer with each molecule binding to one PCNA monomer. PCNA stimulates the nuclease activity without altering cleavage specificity. Mg(2+) is required as a cofactor. Phosphorylated. Phosphorylation upon DNA damage induces relocalization to the nuclear plasma.

Its subcellular location is the nucleus. It is found in the nucleolus. The protein localises to the nucleoplasm. It localises to the mitochondrion. In terms of biological role, structure-specific nuclease with 5'-flap endonuclease and 5'-3' exonuclease activities involved in DNA replication and repair. During DNA replication, cleaves the 5'-overhanging flap structure that is generated by displacement synthesis when DNA polymerase encounters the 5'-end of a downstream Okazaki fragment. It enters the flap from the 5'-end and then tracks to cleave the flap base, leaving a nick for ligation. Also involved in the long patch base excision repair (LP-BER) pathway, by cleaving within the apurinic/apyrimidinic (AP) site-terminated flap. Acts as a genome stabilization factor that prevents flaps from equilibrating into structures that lead to duplications and deletions. Also possesses 5'-3' exonuclease activity on nicked or gapped double-stranded DNA, and exhibits RNase H activity. Also involved in replication and repair of rDNA and in repairing mitochondrial DNA. The protein is Flap endonuclease 1 of Schizosaccharomyces pombe (strain 972 / ATCC 24843) (Fission yeast).